The sequence spans 673 residues: Putative K(+)-stimulated pyrophosphate-energized sodium pump (673 aa).

Transmembrane regions (helical) follow at residues 3–23, 62–82, 84–104, 127–147, and 154–174; these read SFIVYSVLAGVIALIFAFMLS, IVIVTVILAIFVGWQTAACFI, GAIFSIFAGYFGMNVATKANV, VMGMSVVGLGVVGIGIMYYIF, and VTGFGLGASSIALFARVGGGI. Substrate is bound at residue Lys-177. Positions 180, 184, 207, and 210 each coordinate Mg(2+). 6 helical membrane-spanning segments follow: residues 222 to 242, 247 to 267, 279 to 299, 302 to 322, 364 to 384, and 387 to 407; these read LFESYVGSIISALTLGTVVYA, VMFPLILSSIGIVASIIGILF, ALNTGTYIGGIIVIVSAAILS, IFGNLKAFFAVASGLVVGMII, LWPIVLISIGVLVSFFVMGGG, and AMVGLYGISLAAVGMLSTTGL. Asp-419 is a binding site for Mg(2+). 4 helical membrane-spanning segments follow: residues 449-469, 486-506, 553-573, and 576-596; these read AAIGKGFAIGSAALTALSLFA, VTLVGLFIGAMLPFLFGALTM, EMILPGVLAIVVPVAMGLLLG, and ALGGLLAGALVSGVLVGILMS. Ca(2+) contacts are provided by Asp-603, Asp-629, and Asp-633. Lys-636 is a binding site for substrate. A helical membrane pass occupies residues 652–672; sequence IVSLVFAPVVLQYGGILLNLI.

The protein belongs to the H(+)-translocating pyrophosphatase (TC 3.A.10) family. K(+)-stimulated subfamily. Homodimer. The cofactor is Mg(2+).

The protein resides in the cell membrane. It carries out the reaction Na(+)(in) + diphosphate + H2O = Na(+)(out) + 2 phosphate + H(+). Requires K(+) for maximal activity. Functionally, sodium pump that utilizes the energy of pyrophosphate hydrolysis as the driving force for Na(+) movement across the membrane. The chain is Putative K(+)-stimulated pyrophosphate-energized sodium pump from Clostridium tetani (strain Massachusetts / E88).